The following is a 78-amino-acid chain: Large ribosomal subunit protein eL38 (78 aa).

It belongs to the eukaryotic ribosomal protein eL38 family.

The protein is Large ribosomal subunit protein eL38 (RpL38) of Maconellicoccus hirsutus (Pink hibiscus mealybug).